The chain runs to 195 residues: Peptidyl-tRNA hydrolase (195 aa).

Tyrosine 17 is a tRNA binding site. Residue histidine 22 is the Proton acceptor of the active site. Positions 68, 70, and 116 each coordinate tRNA.

Belongs to the PTH family. Monomer.

Its subcellular location is the cytoplasm. The enzyme catalyses an N-acyl-L-alpha-aminoacyl-tRNA + H2O = an N-acyl-L-amino acid + a tRNA + H(+). In terms of biological role, hydrolyzes ribosome-free peptidyl-tRNAs (with 1 or more amino acids incorporated), which drop off the ribosome during protein synthesis, or as a result of ribosome stalling. Catalyzes the release of premature peptidyl moieties from peptidyl-tRNA molecules trapped in stalled 50S ribosomal subunits, and thus maintains levels of free tRNAs and 50S ribosomes. The protein is Peptidyl-tRNA hydrolase of Shewanella sp. (strain ANA-3).